The sequence spans 415 residues: Corticotropin-releasing factor receptor 1 (415 aa).

The N-terminal stretch at 1–23 (MARHPQLRLVKALLLLGLNPVSA) is a signal peptide. Residues 24–111 (SLQDQHCESL…CQEILNEEKK (88 aa)) lie on the Extracellular side of the membrane. 3 cysteine pairs are disulfide-bonded: Cys-30–Cys-54, Cys-44–Cys-87, and Cys-68–Cys-102. N-linked (GlcNAc...) asparagine glycosylation is found at Asn-38, Asn-78, and Asn-98. The segment at 99-108 (YSECQEILNE) is important for peptide agonist binding. Residues 112–142 (SKVHYHVAVIINYLGHCISLVALLVAFVLFL) form a helical membrane-spanning segment. Over 143–149 (RLRSIRC) the chain is Cytoplasmic. Residues 150–174 (LRNIIHWNLISAFILRNATWFVVQL) form a helical membrane-spanning segment. The Extracellular portion of the chain corresponds to 175 to 189 (TMSPEVHQSNVGWCR). The cysteines at positions 188 and 258 are disulfide-linked. The chain crosses the membrane as a helical span at residues 190-218 (LVTAAYNYFHVTNFFWMFGEGCYLHTAIV). Residues 219 to 225 (LTYSTDR) lie on the Cytoplasmic side of the membrane. The chain crosses the membrane as a helical span at residues 226 to 253 (LRKWMFICIGWGVPFPIIVAWAIGKLYY). The Extracellular segment spans residues 254 to 269 (DNEKCWFGKRPGVYTD). A helical transmembrane segment spans residues 270–295 (YIYQGPMILVLLINFIFLFNIVRILM). An important for antagonist binding region spans residues 280 to 290 (LLINFIFLFNI). The Cytoplasmic portion of the chain corresponds to 296–306 (TKLRASTTSET). Phosphoserine; by PKA is present on Ser-301. Residues 307–331 (IQYRKAVKATLVLLPLLGITYMLFF) form a helical membrane-spanning segment. Over 332 to 338 (VNPGEDE) the chain is Extracellular. A helical membrane pass occupies residues 339-368 (VSRVVFIYFNSFLESFQGFFVSVFYCFLNS). The Cytoplasmic portion of the chain corresponds to 369-415 (EVRSAIRKRWHRWQDKHSIRARVARAMSIPTSPTRVSFHSIKQSTAV).

It belongs to the G-protein coupled receptor 2 family. As to quaternary structure, heterodimer; heterodimerizes with GPER1. Interacts (via N-terminal extracellular domain) with CRH and UCN. Interacts with DLG1; this inhibits endocytosis of CRHR1 after agonist binding. C-terminal Ser or Thr residues may be phosphorylated. In terms of processing, phosphorylation at Ser-301 by PKA prevents maximal coupling to Gq-protein, and thereby negatively regulates downstream signaling. Expressed abundantly in the pituitary, cerebral cortex, hippocampus, amygdala and cerebellum.

It localises to the cell membrane. The protein localises to the endosome. Functionally, G-protein coupled receptor for CRH (corticotropin-releasing factor) and UCN (urocortin). Has high affinity for CRH and UCN. Ligand binding causes a conformation change that triggers signaling via guanine nucleotide-binding proteins (G proteins) and down-stream effectors, such as adenylate cyclase. Promotes the activation of adenylate cyclase, leading to increased intracellular cAMP levels. Inhibits the activity of the calcium channel CACNA1H. Required for normal embryonic development of the adrenal gland and for normal hormonal responses to stress. Plays a role in the response to anxiogenic stimuli. This Macaca mulatta (Rhesus macaque) protein is Corticotropin-releasing factor receptor 1 (CRHR1).